Reading from the N-terminus, the 959-residue chain is DNA polymerase 1 (959 aa).

The segment at 1–110 (MRVRGGQEAA…LTLEPSPQSE (110 aa)) is disordered. A compositionally biased stretch (basic and acidic residues) spans 44–60 (KKPEPPPTLHREREPES).

The protein belongs to the DNA polymerase type-B family.

It catalyses the reaction DNA(n) + a 2'-deoxyribonucleoside 5'-triphosphate = DNA(n+1) + diphosphate. In Aeropyrum pernix (strain ATCC 700893 / DSM 11879 / JCM 9820 / NBRC 100138 / K1), this protein is DNA polymerase 1 (polA).